Here is a 256-residue protein sequence, read N- to C-terminus: H-2 class II histocompatibility antigen, A-B alpha chain (256 aa).

The first 23 residues, 1–23 (MPRSRALILGVLALTTMLSLCGG), serve as a signal peptide directing secretion. An alpha-1 region spans residues 24-111 (EDDIEADHVG…KRSNSTPATN (88 aa)). Residues 24–218 (EDDIEADHVG…IPAPMSELTE (195 aa)) lie on the Extracellular side of the membrane. The alpha-2 stretch occupies residues 112–205 (EAPQATVFPK…GLEEPVLKHW (94 aa)). An Ig-like C1-type domain is found at 114–206 (PQATVFPKSP…LEEPVLKHWE (93 aa)). Cys134 and Cys190 are oxidised to a cystine. N-linked (GlcNAc...) asparagine glycosylation occurs at Asn145. Residues 206–218 (EPEIPAPMSELTE) are connecting peptide. A helical transmembrane segment spans residues 219–244 (TVVCALGLSVGLVGIVVGTIFIIQGL). Residues 245–256 (RSGGTSRHPGPL) are Cytoplasmic-facing.

It belongs to the MHC class II family.

It localises to the membrane. This Mus musculus (Mouse) protein is H-2 class II histocompatibility antigen, A-B alpha chain (H2-Aa).